The following is a 386-amino-acid chain: Transcription factor GTE1 (386 aa).

Disordered regions lie at residues 66 to 106 (GAAQ…KHVS) and 340 to 386 (ANKS…AKKA). Residues 68 to 78 (AQTNTSKSNSG) are compositionally biased toward polar residues. A Bromo domain is found at 105–211 (VSSPDLMRQF…EKFEEKWLLI (107 aa)). The NET domain occupies 263–344 (RESVVQRCRK…EALKAANKSS (82 aa)). Residues 345–358 (GGTNAQNNNNTGTG) show a composition bias toward low complexity.

Barely detectable in stems, leaves, siliques, and dry seeds, but was present at considerable levels in roots, flowers and imbibited seeds.

The protein localises to the nucleus. Its function is as follows. Transcription activator that plays a role in the promotion of seed germination by both negatively and positively regulating the abscisic acid (ABA) and phytochrome A (phyA) transduction pathways, respectively. The sequence is that of Transcription factor GTE1 (GTE1) from Arabidopsis thaliana (Mouse-ear cress).